Consider the following 464-residue polypeptide: Glutamate--tRNA ligase 1 (464 aa).

Residues 8–18 (PSPTGHLHVGG) carry the 'HIGH' region motif. Residues 231–235 (PLSKR) carry the 'KMSKS' region motif. Lys-234 contributes to the ATP binding site.

Belongs to the class-I aminoacyl-tRNA synthetase family. Glutamate--tRNA ligase type 1 subfamily. In terms of assembly, monomer.

It is found in the cytoplasm. It carries out the reaction tRNA(Glu) + L-glutamate + ATP = L-glutamyl-tRNA(Glu) + AMP + diphosphate. In terms of biological role, catalyzes the attachment of glutamate to tRNA(Glu) in a two-step reaction: glutamate is first activated by ATP to form Glu-AMP and then transferred to the acceptor end of tRNA(Glu). This is Glutamate--tRNA ligase 1 from Thermotoga petrophila (strain ATCC BAA-488 / DSM 13995 / JCM 10881 / RKU-1).